Reading from the N-terminus, the 313-residue chain is Synaptophysin (313 aa).

Topologically, residues 1–25 are cytoplasmic; sequence MLLLADMDVVNQLVAGGQFRVVKEP. The MARVEL domain maps to 21 to 227; it reads VVKEPLGFVK…NLWFVFKETG (207 aa). The helical transmembrane segment at 26–49 threads the bilayer; sequence LGFVKVLQWVFAIFAFATCGSYSG. At 50–106 the chain is on the vesicular side; the sequence is ELQLSVDCANKTKSDLNIEVEFEYPFRLHEVYFEAPTCQGDPKKIFLVGNYSSSAEF. N-linked (GlcNAc...) asparagine glycosylation occurs at Asn59. Tyr81 carries the phosphotyrosine modification. Residue Asn99 is glycosylated (N-linked (GlcNAc...) asparagine). A helical membrane pass occupies residues 107–130; it reads FVTVAVFAFLYSMGALATYIFLQN. At 131–137 the chain is on the cytoplasmic side; it reads KYRENNK. A helical membrane pass occupies residues 138 to 161; it reads GPMLDFLATAVFAFMWLVSSSAWA. Topologically, residues 162–199 are vesicular; the sequence is KGLSDVKMATDPENIIKGMHVCHQPGNTCKELRDPVTS. Residues 200–223 traverse the membrane as a helical segment; that stretch reads GLNTSVVFGFLNLVLWVGNLWFVF. The Cytoplasmic segment spans residues 224 to 313; the sequence is KETGWAAPFL…GAPTSFSNQM (90 aa). The tract at residues 238–313 is disordered; sequence GAPEKQPAPG…GAPTSFSNQM (76 aa). Residues 253–263 show a composition bias toward gly residues; sequence AGYGQGPGGYG. A repeats, Gly/Tyr-rich region spans residues 254 to 304; the sequence is GYGQGPGGYGPQDSYGPQGGYQPDYGQPASSGGGGYGPQGDYGQQGYGPQG. Residues 264 to 283 are compositionally biased toward low complexity; that stretch reads PQDSYGPQGGYQPDYGQPAS. Positions 284 to 302 are enriched in gly residues; it reads SGGGGYGPQGDYGQQGYGP.

Belongs to the synaptophysin/synaptobrevin family. Homohexamer or homotetramer. Interacts with SRCIN1. Interacts with VAMP2; the interaction is inhibited by interaction of VAPM2 with SEPT8. Ubiquitinated; mediated by SIAH1 or SIAH2 and leading to its subsequent proteasomal degradation. Post-translationally, phosphorylated by SRC. In terms of tissue distribution, characteristic of a type of small (30-80 nm) neurosecretory vesicles, including presynaptic vesicles, but also vesicles of various neuroendocrine cells of both neuronal and epithelial phenotype.

The protein localises to the cytoplasmic vesicle. Its subcellular location is the secretory vesicle. It is found in the synaptic vesicle membrane. It localises to the synapse. The protein resides in the synaptosome. Functionally, possibly involved in structural functions as organizing other membrane components or in targeting the vesicles to the plasma membrane. Involved in the regulation of short-term and long-term synaptic plasticity. The sequence is that of Synaptophysin (SYP) from Bos taurus (Bovine).